The sequence spans 177 residues: Adenylyl-sulfate kinase (177 aa).

12-19 provides a ligand contact to ATP; the sequence is GLSGAGKT. S86 serves as the catalytic Phosphoserine intermediate.

The protein belongs to the APS kinase family.

It carries out the reaction adenosine 5'-phosphosulfate + ATP = 3'-phosphoadenylyl sulfate + ADP + H(+). The protein operates within sulfur metabolism; hydrogen sulfide biosynthesis; sulfite from sulfate: step 2/3. Functionally, catalyzes the synthesis of activated sulfate. The polypeptide is Adenylyl-sulfate kinase (Picosynechococcus sp. (strain ATCC 27264 / PCC 7002 / PR-6) (Agmenellum quadruplicatum)).